A 221-amino-acid polypeptide reads, in one-letter code: 6-phosphogluconate phosphatase (221 aa).

Residue Asp10 is the Nucleophile of the active site. The Mg(2+) site is built by Asp10, Asp12, and Asp167. 10–12 (DCD) is a substrate binding site.

The protein belongs to the HAD-like hydrolase superfamily. CbbY/CbbZ/Gph/YieH family. Mg(2+) serves as cofactor. Requires Mn(2+) as cofactor. It depends on Co(2+) as a cofactor. Zn(2+) is required as a cofactor.

Its function is as follows. Catalyzes strongly the dephosphorylation of 6-phosphogluconate (6P-Glu) and slightly the dephosphorylation of dihydroxyacetone phosphate (DHAP) and phosphoenolpyruvate (PEP). Also hydrolyzes both purines (GMP and IMP) and pyrimidines as secondary substrates. In Escherichia coli (strain K12), this protein is 6-phosphogluconate phosphatase (yieH).